Here is a 717-residue protein sequence, read N- to C-terminus: Fatty acid oxidation complex subunit alpha (717 aa).

Positions 1 to 190 (MIHAGNAITV…KDGAVDAVVA (190 aa)) are enoyl-CoA hydratase/isomerase. Aspartate 298 lines the substrate pocket. A 3-hydroxyacyl-CoA dehydrogenase region spans residues 313–717 (HPVNQAAVLG…MAANNKKFYG (405 aa)). NAD(+) contacts are provided by residues methionine 326, aspartate 345, 402-404 (VTE), lysine 409, and serine 431. The For 3-hydroxyacyl-CoA dehydrogenase activity role is filled by histidine 452. An NAD(+)-binding site is contributed by asparagine 455. Asparagine 502 provides a ligand contact to substrate.

The protein in the N-terminal section; belongs to the enoyl-CoA hydratase/isomerase family. In the C-terminal section; belongs to the 3-hydroxyacyl-CoA dehydrogenase family. In terms of assembly, heterotetramer of two alpha chains (FadB) and two beta chains (FadA).

It catalyses the reaction a (3S)-3-hydroxyacyl-CoA + NAD(+) = a 3-oxoacyl-CoA + NADH + H(+). It carries out the reaction a (3S)-3-hydroxyacyl-CoA = a (2E)-enoyl-CoA + H2O. The enzyme catalyses a 4-saturated-(3S)-3-hydroxyacyl-CoA = a (3E)-enoyl-CoA + H2O. The catalysed reaction is (3S)-3-hydroxybutanoyl-CoA = (3R)-3-hydroxybutanoyl-CoA. It catalyses the reaction a (3Z)-enoyl-CoA = a 4-saturated (2E)-enoyl-CoA. It carries out the reaction a (3E)-enoyl-CoA = a 4-saturated (2E)-enoyl-CoA. It participates in lipid metabolism; fatty acid beta-oxidation. In terms of biological role, involved in the aerobic and anaerobic degradation of long-chain fatty acids via beta-oxidation cycle. Catalyzes the formation of 3-oxoacyl-CoA from enoyl-CoA via L-3-hydroxyacyl-CoA. It can also use D-3-hydroxyacyl-CoA and cis-3-enoyl-CoA as substrate. This chain is Fatty acid oxidation complex subunit alpha, found in Acinetobacter baumannii (strain ACICU).